A 209-amino-acid chain; its full sequence is Protein-L-isoaspartate O-methyltransferase (209 aa).

Ser55 is a catalytic residue.

Belongs to the methyltransferase superfamily. L-isoaspartyl/D-aspartyl protein methyltransferase family.

The protein resides in the cytoplasm. The catalysed reaction is [protein]-L-isoaspartate + S-adenosyl-L-methionine = [protein]-L-isoaspartate alpha-methyl ester + S-adenosyl-L-homocysteine. In terms of biological role, catalyzes the methyl esterification of L-isoaspartyl residues in peptides and proteins that result from spontaneous decomposition of normal L-aspartyl and L-asparaginyl residues. It plays a role in the repair and/or degradation of damaged proteins. The sequence is that of Protein-L-isoaspartate O-methyltransferase from Anaeromyxobacter dehalogenans (strain 2CP-C).